Reading from the N-terminus, the 554-residue chain is Solute carrier family 22 member 22 (554 aa).

The Cytoplasmic portion of the chain corresponds to 1 to 15; that stretch reads MDFDEILHHVGDSGR. A helical membrane pass occupies residues 16 to 36; sequence FQICMIILLNILSLVLSPHDV. The Extracellular segment spans residues 37–144; the sequence is LENFTAAIPA…DLVCDFQSFK (108 aa). N-linked (GlcNAc...) asparagine glycosylation occurs at Asn-39. Residues 145–165 traverse the membrane as a helical segment; that stretch reads YYAQATSLAGHLVSCPLSGII. Residues 166 to 172 are Cytoplasmic-facing; that stretch reads SDRFGRK. Residues 173–193 traverse the membrane as a helical segment; it reads PLLMYCSLAYGAVGTYCAFAP. The N-linked (GlcNAc...) asparagine glycan is linked to Asn-194. Over 194–199 the chain is Extracellular; it reads NFSVYC. The helical transmembrane segment at 200–220 threads the bilayer; sequence VLRFLLSAFQSTILINSLILV. Residues 221–231 are Cytoplasmic-facing; that stretch reads LEEASVQWHPT. A helical transmembrane segment spans residues 232–252; that stretch reads IIVLSGLFNSIGQGVLGGLAY. Topologically, residues 253–258 are extracellular; that stretch reads VISDWH. The helical transmembrane segment at 259 to 279 threads the bilayer; the sequence is LLQLAYALPFFIFFVLFCWVP. The Cytoplasmic segment spans residues 280 to 347; that stretch reads ESVRWLIITG…DIFINPLIRK (68 aa). Residues 348–368 traverse the membrane as a helical segment; sequence IVLSNSSLLFAELFSFVGLLL. Topologically, residues 369–376 are extracellular; sequence DVQLLGKN. A helical transmembrane segment spans residues 377–397; the sequence is MFLTQIFLGAIDVPSKSLTYF. At 398–405 the chain is on the cytoplasmic side; the sequence is TIRNVSRR. The chain crosses the membrane as a helical span at residues 406–426; it reads PLIAFLLLTTGSCITITIFIS. Residues 427–434 are Extracellular-facing; that stretch reads EEMYVLRT. A helical transmembrane segment spans residues 435–455; it reads IIFILGKGCFAAFTCISTTYI. Topologically, residues 456–466 are cytoplasmic; it reads NELSPVELRST. The helical transmembrane segment at 467–487 threads the bilayer; sequence LNGVFLAVVRLAGVLSALTLA. The Extracellular segment spans residues 488 to 491; that stretch reads TRKY. The helical transmembrane segment at 492 to 512 threads the bilayer; that stretch reads FVYLPMILYGVLPIVATISIL. The Cytoplasmic segment spans residues 513–554; sequence FLPETFNLPHTDIIKDMEKRKRLMSKNISKKEGQDFLETTEC.

Belongs to the major facilitator (TC 2.A.1) superfamily. Organic cation transporter (TC 2.A.1.19) family. In terms of tissue distribution, specifically expressed in kidney where it is found in proximal convoluted tubules (at protein level). Colocalizes with the prostaglandin-inactivating enzyme HPGD in kidney (at protein level). Not detected in other tissues tested.

The protein resides in the basolateral cell membrane. Functionally, sodium-independent organic anion transporter which exhibits high specificity for a subset of prostaglandins including prostaglandin E2 (PGE2), prostaglandin E1 (PGE1), prostaglandin F2-alpha (PGF2-alpha) and prostaglandin D2 (PGD2). This is Solute carrier family 22 member 22 from Mus musculus (Mouse).